A 43-amino-acid polypeptide reads, in one-letter code: Protein PsbN (43 aa).

The chain crosses the membrane as a helical span at residues 7 to 27 (VTIFISGLLVSFTGYALYIAF).

Belongs to the PsbN family.

The protein localises to the plastid. It localises to the chloroplast thylakoid membrane. In terms of biological role, may play a role in photosystem I and II biogenesis. This is Protein PsbN from Dioscorea bulbifera (Air potato).